The chain runs to 68 residues: MRTSYLLLFTLCLLLSEMASGGNFLTGLGHRSDHYNCVSSGGQCLYSACPIFTKIQGTCYRGKAKCCK.

An N-terminal signal peptide occupies residues 1 to 21; the sequence is MRTSYLLLFTLCLLLSEMASG. The propeptide occupies 22–32; that stretch reads GNFLTGLGHRS. Cystine bridges form between C37–C66, C44–C59, and C49–C67.

The protein belongs to the beta-defensin family. In terms of assembly, monomer. Homodimer.

The protein localises to the secreted. It is found in the membrane. In terms of biological role, has bactericidal activity. May act as a ligand for C-C chemokine receptor CCR6. Positively regulates the sperm motility and bactericidal activity in a CCR6-dependent manner. Binds to CCR6 and triggers Ca2+ mobilization in the sperm which is important for its motility. The protein is Beta-defensin 1 (DEFB1) of Pongo pygmaeus (Bornean orangutan).